Consider the following 407-residue polypeptide: Imidazolonepropionase (407 aa).

The Fe(3+) site is built by histidine 74 and histidine 76. Histidine 74 and histidine 76 together coordinate Zn(2+). 4-imidazolone-5-propanoate contacts are provided by arginine 83, tyrosine 146, and histidine 179. Tyrosine 146 contributes to the N-formimidoyl-L-glutamate binding site. Histidine 244 is a binding site for Fe(3+). Histidine 244 serves as a coordination point for Zn(2+). Glutamine 247 contacts 4-imidazolone-5-propanoate. Position 319 (aspartate 319) interacts with Fe(3+). Aspartate 319 contacts Zn(2+). Residues asparagine 321 and glycine 323 each contribute to the N-formimidoyl-L-glutamate site. Threonine 324 contacts 4-imidazolone-5-propanoate.

This sequence belongs to the metallo-dependent hydrolases superfamily. HutI family. The cofactor is Zn(2+). Fe(3+) is required as a cofactor.

Its subcellular location is the cytoplasm. The enzyme catalyses 4-imidazolone-5-propanoate + H2O = N-formimidoyl-L-glutamate. Its pathway is amino-acid degradation; L-histidine degradation into L-glutamate; N-formimidoyl-L-glutamate from L-histidine: step 3/3. Functionally, catalyzes the hydrolytic cleavage of the carbon-nitrogen bond in imidazolone-5-propanoate to yield N-formimidoyl-L-glutamate. It is the third step in the universal histidine degradation pathway. The sequence is that of Imidazolonepropionase from Salmonella arizonae (strain ATCC BAA-731 / CDC346-86 / RSK2980).